Reading from the N-terminus, the 187-residue chain is Peptidyl-tRNA hydrolase (187 aa).

Tyr14 lines the tRNA pocket. The active-site Proton acceptor is the His19. TRNA-binding residues include Tyr64 and Asn66.

Belongs to the PTH family. Monomer.

Its subcellular location is the cytoplasm. It catalyses the reaction an N-acyl-L-alpha-aminoacyl-tRNA + H2O = an N-acyl-L-amino acid + a tRNA + H(+). Its function is as follows. Hydrolyzes ribosome-free peptidyl-tRNAs (with 1 or more amino acids incorporated), which drop off the ribosome during protein synthesis, or as a result of ribosome stalling. Catalyzes the release of premature peptidyl moieties from peptidyl-tRNA molecules trapped in stalled 50S ribosomal subunits, and thus maintains levels of free tRNAs and 50S ribosomes. The sequence is that of Peptidyl-tRNA hydrolase from Carboxydothermus hydrogenoformans (strain ATCC BAA-161 / DSM 6008 / Z-2901).